The primary structure comprises 124 residues: AESSAMKFQRQHMDSDGHPDTNTNYCNEMMVRRSMTQGRCKPVNTFVHEPLEAVQAVCSQKNVPCKNGQTNCYQSHSSMRITDCRVTSSSKYPNCSYRMTQAQKSIIVACEGTPSVPVHFDATV.

The tract at residues 1–21 (AESSAMKFQRQHMDSDGHPDT) is disordered. Positions 7 and 10 each coordinate substrate. The active-site Proton acceptor is the His12. Intrachain disulfides connect Cys26/Cys84, Cys40/Cys95, Cys58/Cys110, and Cys65/Cys72. Substrate-binding positions include 41–45 (KPVNT), Lys66, and Arg85. The active-site Proton donor is the His119.

The protein belongs to the pancreatic ribonuclease family. As to quaternary structure, monomer. Interacts with and forms tight 1:1 complexes with RNH1. Dimerization of two such complexes may occur. Interaction with RNH1 inhibits this protein. As to expression, pancreas.

The protein resides in the secreted. The catalysed reaction is an [RNA] containing cytidine + H2O = an [RNA]-3'-cytidine-3'-phosphate + a 5'-hydroxy-ribonucleotide-3'-[RNA].. The enzyme catalyses an [RNA] containing uridine + H2O = an [RNA]-3'-uridine-3'-phosphate + a 5'-hydroxy-ribonucleotide-3'-[RNA].. In terms of biological role, endonuclease that catalyzes the cleavage of RNA on the 3' side of pyrimidine nucleotides. Acts on single-stranded and double-stranded RNA. The polypeptide is Ribonuclease pancreatic (RNASE1) (Galea musteloides (Common yellow-toothed cavy)).